Reading from the N-terminus, the 906-residue chain is Catenin alpha-1 (906 aa).

T2 carries the N-acetylthreonine modification. Residues 2-228 (TAVHAGNINF…PILYTASQAC (227 aa)) form an involved in homodimerization region. A Glycyl lysine isopeptide (Lys-Gly) (interchain with G-Cter in SUMO2) cross-link involves residue K57. Residues 97–148 (VRKQGDLMKAAAGEFADDPCSSVKRGNMVRAARALLSAVTRLLILADMADVY) are interaction with JUP and CTNNB1. Phosphoserine occurs at positions 264, 268, 295, and 297. Positions 325–394 (TRDDRRERIV…AVMDHVSDSF (70 aa)) are interaction with alpha-actinin. Phosphothreonine is present on T634. S641 is subject to Phosphoserine; by CK2. T645 is modified (phosphothreonine). 2 positions are modified to phosphoserine; by CK1: S652 and S655. T658 is subject to Phosphothreonine; by CK1. K797 is covalently cross-linked (Glycyl lysine isopeptide (Lys-Gly) (interchain with G-Cter in SUMO2)). S851 carries the post-translational modification Phosphoserine. The span at 864–880 (PEKKPLVKREKQDETQT) shows a compositional bias: basic and acidic residues. The disordered stretch occupies residues 864–894 (PEKKPLVKREKQDETQTKIKRASQKKHVNPV). A compositionally biased stretch (basic residues) spans 881–891 (KIKRASQKKHV).

Belongs to the vinculin/alpha-catenin family. Monomer and homodimer; the monomer preferentially binds to CTNNB1 and the homodimer to actin. Component of an cadherin:catenin adhesion complex composed of at least of CDH26, beta-catenin/CTNNB1, alpha-catenin/CTNNA1 and p120 catenin/CTNND1. Possible component of an E-cadherin/ catenin adhesion complex together with E-cadherin/CDH1 and beta-catenin/CTNNB1 or gamma-catenin/JUP; the complex is located to adherens junctions. The stable association of CTNNA1 is controversial as CTNNA1 was shown not to bind to F-actin when assembled in the complex. Alternatively, the CTNNA1-containing complex may be linked to F-actin by other proteins such as LIMA1. Binds AFDN and F-actin. Interacts with ARHGAP21. Interacts with AJUBA. Interacts with LIMA1. Interacts with vinculin/VCL. Interacts with TJP2/ZO2 (via N-terminus). Interacts with TJP1/ZO1 (via N-terminus). In terms of processing, sumoylated. Post-translationally, phosphorylation seems to contribute to the strength of cell-cell adhesion rather than to the basic capacity for cell-cell adhesion. As to expression, ubiquitously expressed in normal tissues. In terms of tissue distribution, abundantly expressed in brain and cerebellum, also expressed in the placenta, liver, lung, colon, heart, pancreas, stomach and thymus.

Its subcellular location is the cytoplasm. It localises to the cytoskeleton. The protein resides in the cell junction. It is found in the adherens junction. The protein localises to the cell membrane. Its subcellular location is the nucleus. Functionally, associates with the cytoplasmic domain of a variety of cadherins. The association of catenins to cadherins produces a complex which is linked to the actin filament network, and which seems to be of primary importance for cadherins cell-adhesion properties. Can associate with both E- and N-cadherins. Originally believed to be a stable component of E-cadherin/catenin adhesion complexes and to mediate the linkage of cadherins to the actin cytoskeleton at adherens junctions. In contrast, cortical actin was found to be much more dynamic than E-cadherin/catenin complexes and CTNNA1 was shown not to bind to F-actin when assembled in the complex suggesting a different linkage between actin and adherens junctions components. The homodimeric form may regulate actin filament assembly and inhibit actin branching by competing with the Arp2/3 complex for binding to actin filaments. Involved in the regulation of WWTR1/TAZ, YAP1 and TGFB1-dependent SMAD2 and SMAD3 nuclear accumulation. May play a crucial role in cell differentiation. The sequence is that of Catenin alpha-1 from Homo sapiens (Human).